We begin with the raw amino-acid sequence, 281 residues long: Merozoite surface protein 2 (281 aa).

The signal sequence occupies residues 1–20 (MKVIKTLSIINFFIFVTFNI). N-linked (GlcNAc...) asparagine glycans are attached at residues N22 and N36. A disordered region spans residues 42–242 (SMEESNPPTG…DSQKECTDGN (201 aa)). The polymorphic region stretch occupies residues 44–207 (EESNPPTGAS…EQTESPELQS (164 aa)). Tandem repeats lie at residues 51-58 (GASGRAGA), 59-66 (GASGRAGA), and 67-74 (GASGRAGA). Residues 51–74 (GASGRAGAGASGRAGAGASGRAGA) are 3 X 8 AA tandem repeats of G-A-S-G-R-A-G-A. The span at 54-76 (GRAGAGASGRAGAGASGRAGAGA) shows a compositional bias: gly residues. Residues 77 to 133 (GAVASAGSGDGAVASAGNGANPGADAKRSTSTPATTTTTTTTNDAEASTSTSSENPN) show a composition bias toward low complexity. Polar residues-rich tracts occupy residues 150–174 (NKAN…NVPP) and 181–209 (KSPT…QSAP). Residue N158 is glycosylated (N-linked (GlcNAc...) asparagine). N-linked (GlcNAc...) asparagine glycosylation is present at N230. Residues C238 and C246 are joined by a disulfide bond. N254 and N255 each carry an N-linked (GlcNAc...) asparagine glycan. N255 is lipidated: GPI-anchor amidated asparagine. Positions 256–281 (SSNIASINKFVVLISATLVLSFAIFI) are cleaved as a propeptide — removed in mature form.

The protein resides in the cell membrane. May play a role in the merozoite attachment to the erythrocyte. This is Merozoite surface protein 2 from Plasmodium falciparum (isolate thtn / Thailand).